The chain runs to 239 residues: Large ribosomal subunit protein eL32 (239 aa).

2 stretches are compositionally biased toward acidic residues: residues 1-12 (MSDENDTPEELA) and 67-91 (VEAD…ADVE). 2 disordered regions span residues 1 to 23 (MSDE…SKAE) and 64 to 178 (GLEV…HPSG). Basic and acidic residues predominate over residues 92–113 (TELRARGLTEKTPDLSEDEQRL). Positions 130-155 (YHKKKRTPTSWRRPKGTLSKQRRGIK) are enriched in basic residues.

This sequence belongs to the eukaryotic ribosomal protein eL32 family.

The protein is Large ribosomal subunit protein eL32 (rpl32e) of Halobacterium salinarum (strain ATCC 700922 / JCM 11081 / NRC-1) (Halobacterium halobium).